The following is a 431-amino-acid chain: Histidinol dehydrogenase (431 aa).

Positions 131, 193, and 216 each coordinate NAD(+). Substrate contacts are provided by Ser-239, Gln-261, and His-264. Residues Gln-261 and His-264 each coordinate Zn(2+). Active-site proton acceptor residues include Glu-329 and His-330. Substrate contacts are provided by His-330, Asp-363, Glu-417, and His-422. Asp-363 serves as a coordination point for Zn(2+). His-422 contacts Zn(2+).

Belongs to the histidinol dehydrogenase family. It depends on Zn(2+) as a cofactor.

The enzyme catalyses L-histidinol + 2 NAD(+) + H2O = L-histidine + 2 NADH + 3 H(+). It functions in the pathway amino-acid biosynthesis; L-histidine biosynthesis; L-histidine from 5-phospho-alpha-D-ribose 1-diphosphate: step 9/9. Catalyzes the sequential NAD-dependent oxidations of L-histidinol to L-histidinaldehyde and then to L-histidine. In Clostridium acetobutylicum (strain ATCC 824 / DSM 792 / JCM 1419 / IAM 19013 / LMG 5710 / NBRC 13948 / NRRL B-527 / VKM B-1787 / 2291 / W), this protein is Histidinol dehydrogenase.